The chain runs to 1978 residues: Centrosomal protein Cep290 (1978 aa).

The segment at 1-650 (MSMDIPETVS…SLCEVPEIAE (650 aa)) is necessary and sufficient for function in ciliogenesis, transition zone (TZ) assembly, and recruitment of DZP1 and Mks1 to the TZ. Also required for subcellular localization to the cilium basal body. Coiled-coil stretches lie at residues 76 to 384 (DRRL…KSQQ) and 471 to 505 (IERLTLKLRTSEELRLQLKLEKSELRRKLLELQQD). The tract at residues 271–296 (QLEGKSISSGQTNSSNSQSQQEEEHA) is disordered. Residues 276–290 (SISSGQTNSSNSQSQ) show a composition bias toward low complexity. Residues 663–688 (ATRPSSPTEATMGLRRPTVPDPEEKP) are disordered. Coiled coils occupy residues 853-887 (FEEQQQELLTWRSKQAELQRETKQLEGLLHVANEQ), 922-970 (LAKV…TQQD), and 1192-1233 (ADAV…SRSE). Basic and acidic residues predominate over residues 1313–1324 (KEKLRQKPEVPV). Residues 1313-1397 (KEKLRQKPEV…EKQDTEELKE (85 aa)) are disordered. A compositionally biased stretch (low complexity) spans 1329 to 1341 (STDSRSSSSSDSS). Residues 1379 to 1391 (VTEEPEGEEEKQD) show a composition bias toward acidic residues. 2 coiled-coil regions span residues 1405–1439 (IKDLKDKLEYSERSLKTREEEVDILKEKLKLCQER) and 1501–1654 (LNRT…LESK). 2 disordered regions span residues 1684-1714 (VGVSKFAPSPSESPETYTGPSSECSSPAHHH) and 1859-1884 (LKDGRRSTESRSSMDSTPAEAARLQQ). Polar residues predominate over residues 1693–1708 (PSESPETYTGPSSECS). Residues 1726 to 1935 (IEALKSRIEL…KEQLVKKTQL (210 aa)) adopt a coiled-coil conformation.

Interacts (via N-terminus) with DZIP1. Expressed in sensory neurons type I and in germ cells (at protein level).

It localises to the cytoplasm. The protein localises to the cytoskeleton. It is found in the cilium basal body. The protein resides in the microtubule organizing center. Its subcellular location is the centrosome. It localises to the centriole. Functionally, essential for ciliogenesis in sensory neurons and spermatocytes. During neuron and spermatocyte ciliogenesis, essential for initiating transition zone (TZ) assembly and is required for the formation of diverse connections between microtubules and between microtubules and the membrane. Regulates TZ assembly by recruiting DZIP1 to the plasma membrane where it promotes early ciliary membrane formation resulting in the initiation of TZ assembly. The protein is Centrosomal protein Cep290 of Drosophila melanogaster (Fruit fly).